Consider the following 133-residue polypeptide: Small ribosomal subunit protein eS8 (133 aa).

The disordered stretch occupies residues 1–22 (MGFYQGPDNRKITGGLKGKHRD).

Belongs to the eukaryotic ribosomal protein eS8 family. Part of the 30S ribosomal subunit.

This chain is Small ribosomal subunit protein eS8, found in Saccharolobus islandicus (strain M.14.25 / Kamchatka #1) (Sulfolobus islandicus).